A 339-amino-acid chain; its full sequence is 4-hydroxy-2-oxovalerate aldolase (339 aa).

The 253-residue stretch at 7 to 259 (VILHDMSLRD…QSGIDLYKIM (253 aa)) folds into the Pyruvate carboxyltransferase domain. Residue 15 to 16 (RD) participates in substrate binding. A Mn(2+)-binding site is contributed by Asp-16. The Proton acceptor role is filled by His-19. Ser-169 and His-198 together coordinate substrate. His-198 and His-200 together coordinate Mn(2+). Residue Tyr-289 coordinates substrate.

This sequence belongs to the 4-hydroxy-2-oxovalerate aldolase family.

It carries out the reaction (S)-4-hydroxy-2-oxopentanoate = acetaldehyde + pyruvate. The polypeptide is 4-hydroxy-2-oxovalerate aldolase (Marinomonas sp. (strain MWYL1)).